The chain runs to 267 residues: Putative carbamate hydrolase RutD (267 aa).

The AB hydrolase-1 domain maps to 23–139; that stretch reads VVLLSSGLGG…IQRCFDTRIH (117 aa).

This sequence belongs to the AB hydrolase superfamily. Hydrolase RutD family.

It catalyses the reaction carbamate + 2 H(+) = NH4(+) + CO2. Its function is as follows. Involved in pyrimidine catabolism. May facilitate the hydrolysis of carbamate, a reaction that can also occur spontaneously. The protein is Putative carbamate hydrolase RutD of Caulobacter segnis (strain ATCC 21756 / DSM 7131 / JCM 7823 / NBRC 15250 / LMG 17158 / TK0059) (Mycoplana segnis).